A 151-amino-acid polypeptide reads, in one-letter code: Meiotically up-regulated gene 114 protein (151 aa).

It localises to the cytoplasm. Has a role in meiosis. The sequence is that of Meiotically up-regulated gene 114 protein (mug114) from Schizosaccharomyces pombe (strain 972 / ATCC 24843) (Fission yeast).